The chain runs to 130 residues: Small ribosomal subunit protein uS11 (130 aa).

It belongs to the universal ribosomal protein uS11 family. As to quaternary structure, part of the 30S ribosomal subunit. Interacts with proteins S7 and S18. Binds to IF-3.

In terms of biological role, located on the platform of the 30S subunit, it bridges several disparate RNA helices of the 16S rRNA. Forms part of the Shine-Dalgarno cleft in the 70S ribosome. This chain is Small ribosomal subunit protein uS11, found in Dehalococcoides mccartyi (strain ATCC BAA-2266 / KCTC 15142 / 195) (Dehalococcoides ethenogenes (strain 195)).